A 442-amino-acid polypeptide reads, in one-letter code: UDP-N-acetylmuramate--L-alanine ligase (442 aa).

110-116 (GAHGKTS) is an ATP binding site.

This sequence belongs to the MurCDEF family.

It is found in the cytoplasm. The catalysed reaction is UDP-N-acetyl-alpha-D-muramate + L-alanine + ATP = UDP-N-acetyl-alpha-D-muramoyl-L-alanine + ADP + phosphate + H(+). Its pathway is cell wall biogenesis; peptidoglycan biosynthesis. Functionally, cell wall formation. In Streptococcus thermophilus (strain ATCC BAA-491 / LMD-9), this protein is UDP-N-acetylmuramate--L-alanine ligase.